Reading from the N-terminus, the 591-residue chain is NADH-quinone oxidoreductase subunit C/D (591 aa).

Positions 1–182 (MVTVVENIDP…TPYFLNTAKQ (182 aa)) are NADH dehydrogenase I subunit C. Residues 206–591 (DFMFLNIGPN…IDVVMADCDR (386 aa)) form an NADH dehydrogenase I subunit D region.

In the N-terminal section; belongs to the complex I 30 kDa subunit family. The protein in the C-terminal section; belongs to the complex I 49 kDa subunit family. In terms of assembly, NDH-1 is composed of 13 different subunits. Subunits NuoB, CD, E, F, and G constitute the peripheral sector of the complex.

It localises to the cell inner membrane. The enzyme catalyses a quinone + NADH + 5 H(+)(in) = a quinol + NAD(+) + 4 H(+)(out). In terms of biological role, NDH-1 shuttles electrons from NADH, via FMN and iron-sulfur (Fe-S) centers, to quinones in the respiratory chain. The immediate electron acceptor for the enzyme in this species is believed to be ubiquinone. Couples the redox reaction to proton translocation (for every two electrons transferred, four hydrogen ions are translocated across the cytoplasmic membrane), and thus conserves the redox energy in a proton gradient. In Psychrobacter arcticus (strain DSM 17307 / VKM B-2377 / 273-4), this protein is NADH-quinone oxidoreductase subunit C/D.